The chain runs to 445 residues: MISLNIEKTFGFISKESVSAYEAQVKAAQEALENGTGKGNDFLGWLHLPSSISKEHLADLKATAQVLRDNCEVVIVAGIGGSYLGARAVIEALSNSFTWLQEKKTAPVMIYAGHNIGEDYLYELTEFLKDKKFGVINISKSGTTTETALAFRLLKKQCEDQRGKEMAKKVIVAVTDAKKGAARVTADKEGYKSFIIPDNVGGRFSVLTPVGLLPIAVAGFDIEQLVNGAADMEKACGADVPFAENPAAIYAATRNELYKNGKKIEILVNFCPKLHYVSEWWKQLYGESEGKDNKGIFPAAVDFSTDLHSMGQWIQEGERTIFETVISVDKVNHKLEVPSDEANLDGLNFLAGKRVDEVNKMAELGTQLAHVDGGVPNMRIVIPELSEFSIGQLLYFFEKACGISGYLLGVNPFNQPGVEAYKKNMFALLNKPGYEEESKAIQARL.

Glutamate 287 acts as the Proton donor in catalysis. Active-site residues include histidine 308 and lysine 422.

The protein belongs to the GPI family.

Its subcellular location is the cytoplasm. The enzyme catalyses alpha-D-glucose 6-phosphate = beta-D-fructose 6-phosphate. It functions in the pathway carbohydrate biosynthesis; gluconeogenesis. The protein operates within carbohydrate degradation; glycolysis; D-glyceraldehyde 3-phosphate and glycerone phosphate from D-glucose: step 2/4. In terms of biological role, catalyzes the reversible isomerization of glucose-6-phosphate to fructose-6-phosphate. This is Glucose-6-phosphate isomerase from Bacteroides fragilis (strain ATCC 25285 / DSM 2151 / CCUG 4856 / JCM 11019 / LMG 10263 / NCTC 9343 / Onslow / VPI 2553 / EN-2).